Here is a 544-residue protein sequence, read N- to C-terminus: Phosphomannomutase (544 aa).

Catalysis depends on Ser145, which acts as the Phosphoserine intermediate. Mg(2+)-binding residues include Ser145, Asp297, Asp299, and Asp301.

This sequence belongs to the phosphohexose mutase family. The cofactor is Mg(2+).

It carries out the reaction alpha-D-mannose 1-phosphate = D-mannose 6-phosphate. In Mycoplasmoides pirum (Mycoplasma pirum), this protein is Phosphomannomutase (manB).